A 215-amino-acid chain; its full sequence is UPF0502 protein YceH (215 aa).

This sequence belongs to the UPF0502 family.

The chain is UPF0502 protein YceH from Salmonella paratyphi B (strain ATCC BAA-1250 / SPB7).